A 926-amino-acid chain; its full sequence is Protein translocase subunit SecA (926 aa).

ATP contacts are provided by residues glutamine 87, 105 to 109 (GEGKT), and aspartate 512. Positions 911, 913, 922, and 923 each coordinate Zn(2+).

This sequence belongs to the SecA family. As to quaternary structure, monomer and homodimer. Part of the essential Sec protein translocation apparatus which comprises SecA, SecYEG and auxiliary proteins SecDF-YajC and YidC. Zn(2+) is required as a cofactor.

The protein localises to the cell inner membrane. It is found in the cytoplasm. The enzyme catalyses ATP + H2O + cellular proteinSide 1 = ADP + phosphate + cellular proteinSide 2.. Its function is as follows. Part of the Sec protein translocase complex. Interacts with the SecYEG preprotein conducting channel. Has a central role in coupling the hydrolysis of ATP to the transfer of proteins into and across the cell membrane, serving both as a receptor for the preprotein-SecB complex and as an ATP-driven molecular motor driving the stepwise translocation of polypeptide chains across the membrane. The polypeptide is Protein translocase subunit SecA (Psychrobacter cryohalolentis (strain ATCC BAA-1226 / DSM 17306 / VKM B-2378 / K5)).